An 862-amino-acid polypeptide reads, in one-letter code: S-layer protein EA1 (862 aa).

A signal peptide spans 1–29 (MAKTNSYKKVIAGTMTAAMVAGIVSPVAA). SLH domains are found at residues 30–93 (AGKS…NAQP), 94–151 (SFKD…KVNG), and 152–214 (ELVT…DNAQ).

It localises to the secreted. The protein resides in the cell wall. The protein localises to the S-layer. In terms of biological role, the S-layer is a paracrystalline mono-layered assembly of proteins which coat the surface of bacteria. This chain is S-layer protein EA1 (eag), found in Bacillus anthracis.